The sequence spans 276 residues: 3,4-dihydroxyphenylacetate 2,3-dioxygenase (276 aa).

It depends on Fe cation as a cofactor.

It carries out the reaction 3,4-dihydroxyphenylacetate + O2 = 2-hydroxy-5-carboxymethylmuconate semialdehyde + H(+). It functions in the pathway aromatic compound metabolism; 4-hydroxyphenylacetate degradation; pyruvate and succinate semialdehyde from 4-hydroxyphenylacetate: step 2/7. Its function is as follows. Transforms homoprotocatechuic acid (HPC) into 5-carboxymethyl-2-hydroxy-muconic semialdehyde (CHMS). In Escherichia coli, this protein is 3,4-dihydroxyphenylacetate 2,3-dioxygenase (hpcB).